A 113-amino-acid chain; its full sequence is U11-theraphotoxin-Hhn1a (113 aa).

The signal sequence occupies residues 1–21; sequence MNTVRVTFLLVFVLAVSLGQA. The propeptide occupies 22–74; sequence DKDENRMEMQEKTEQGKGYLDFAENLLPQKLEELEAKLLEEDSEESRNSRQKR. Positions 59 to 69 are enriched in basic and acidic residues; the sequence is LLEEDSEESRN. Residues 59–83 are disordered; sequence LLEEDSEESRNSRQKRCIGEGVPCD. Intrachain disulfides connect Cys75–Cys90, Cys82–Cys95, and Cys89–Cys110.

This sequence belongs to the neurotoxin 14 (magi-1) family. 01 (HNTX-16) subfamily. In terms of tissue distribution, expressed by the venom gland.

Its subcellular location is the secreted. Probable ion channel inhibitor. This Cyriopagopus hainanus (Chinese bird spider) protein is U11-theraphotoxin-Hhn1a.